We begin with the raw amino-acid sequence, 251 residues long: Prolactin-7B1 (251 aa).

An N-terminal signal peptide occupies residues 1–29; that stretch reads MHLSLTQQCLWPLQILLVSNLLLWENVAA. A glycan (N-linked (GlcNAc...) asparagine) is linked at Asn-73. 2 cysteine pairs are disulfide-bonded: Cys-100–Cys-216 and Cys-233–Cys-241.

This sequence belongs to the somatotropin/prolactin family.

It is found in the secreted. The sequence is that of Prolactin-7B1 (Prl7b1) from Rattus norvegicus (Rat).